A 189-amino-acid chain; its full sequence is T-cell surface glycoprotein CD3 epsilon chain (189 aa).

An N-terminal signal peptide occupies residues 1–21; the sequence is MRWNTFWGILCLSLLAVGTCQ. The region spanning 23–99 is the Ig-like domain; the sequence is DAENIEYKVS…KNTYLYLKAR (77 aa). Over 23-108 the chain is Extracellular; the sequence is DAENIEYKVS…RVCEYCVEVD (86 aa). A disulfide bridge links C42 with C83. A helical transmembrane segment spans residues 109–134; that stretch reads LTAVAIIIIVDICITLGLLMVIYYWS. Residues 135 to 189 are Cytoplasmic-facing; it reads KNRKAKAKPVTRGTGAGSRPRGQNKERPPPVPNPDYEPIRKGQRDLYSGLNQRAV. The disordered stretch occupies residues 143–189; that stretch reads PVTRGTGAGSRPRGQNKERPPPVPNPDYEPIRKGQRDLYSGLNQRAV. The segment at 157-174 is NUMB-binding region; it reads QNKERPPPVPNPDYEPIR. An ITAM domain is found at 160 to 187; that stretch reads ERPPPVPNPDYEPIRKGQRDLYSGLNQR. The interval 161–168 is proline-rich sequence; sequence RPPPVPNP. Residues Y170 and Y181 each carry the phosphotyrosine modification.

As to quaternary structure, the TCR-CD3 complex is composed of a CD3D/CD3E and a CD3G/CD3E heterodimers that preferentially associate with TCRalpha and TCRbeta, respectively, to form TCRalpha/CD3E/CD3G and TCRbeta/CD3G/CD3E trimers. In turn, the hexamer interacts with CD3Z homodimer to form the TCR-CD3 complex. Alternatively, TCRalpha and TCRbeta can be replaced by TCRgamma and TCRdelta. Interacts with CD6. Interacts (via Proline-rich sequence) with NCK1; the interaction is ligand dependent but independent of tyrosine kinase activation. In terms of processing, phosphorylated on Tyr residues after T-cell receptor triggering by LCK in association with CD4/CD8.

It is found in the cell membrane. Its function is as follows. Part of the TCR-CD3 complex present on T-lymphocyte cell surface that plays an essential role in adaptive immune response. When antigen presenting cells (APCs) activate T-cell receptor (TCR), TCR-mediated signals are transmitted across the cell membrane by the CD3 chains CD3D, CD3E, CD3G and CD3Z. All CD3 chains contain immunoreceptor tyrosine-based activation motifs (ITAMs) in their cytoplasmic domain. Upon TCR engagement, these motifs become phosphorylated by Src family protein tyrosine kinases LCK and FYN, resulting in the activation of downstream signaling pathways. In addition of this role of signal transduction in T-cell activation, CD3E plays an essential role in correct T-cell development. Also participates in internalization and cell surface down-regulation of TCR-CD3 complexes via endocytosis sequences present in CD3E cytosolic region. In addition to its role as a TCR coreceptor, it serves as a receptor for ITPRIPL1. Ligand recognition inhibits T-cell activation by promoting interaction with NCK1, which prevents CD3E-ZAP70 interaction and blocks the ERK-NFkB signaling cascade and calcium influx. The chain is T-cell surface glycoprotein CD3 epsilon chain (Cd3e) from Mus musculus (Mouse).